Reading from the N-terminus, the 221-residue chain is Ribosomal RNA small subunit methyltransferase Nep1 (221 aa).

Residues Gly174, Gly179, and 196-201 (IGNVSL) each bind S-adenosyl-L-methionine.

It belongs to the class IV-like SAM-binding methyltransferase superfamily. RNA methyltransferase NEP1 family. In terms of assembly, homodimer.

The catalysed reaction is a pseudouridine in rRNA + S-adenosyl-L-methionine = an N(1)-methylpseudouridine in rRNA + S-adenosyl-L-homocysteine + H(+). Methyltransferase involved in ribosomal biogenesis. Specifically catalyzes the N1-methylation of the pseudouridine corresponding to position 914 in M.jannaschii 16S rRNA. The chain is Ribosomal RNA small subunit methyltransferase Nep1 from Pyrobaculum calidifontis (strain DSM 21063 / JCM 11548 / VA1).